Here is a 274-residue protein sequence, read N- to C-terminus: Protein A11 homolog (274 aa).

A coiled-coil region spans residues 106 to 136; that stretch reads DDNKRVHLLEQEIAELRKKKTKSKNLLDFTN.

It belongs to the poxviridae A11 family. As to quaternary structure, homomultimer. Interacts with A32. Post-translationally, phosphorylated by a F10-independent mechanism.

The protein localises to the host cytoplasm. Functionally, required for viral crescent formation early during virus morphogenesis. The sequence is that of Protein A11 homolog from Fowlpox virus (strain NVSL) (FPV).